The sequence spans 143 residues: Large ribosomal subunit protein uL15 (143 aa).

The tract at residues 1–58 is disordered; sequence MQLNDLRSAPGARREKHRPGRGIGSGLGKTGGRGHKGQTSRSGGSIAPGFEGGQQPLH. Over residues 21–31 the composition is skewed to gly residues; that stretch reads RGIGSGLGKTG.

It belongs to the universal ribosomal protein uL15 family. In terms of assembly, part of the 50S ribosomal subunit.

Functionally, binds to the 23S rRNA. The sequence is that of Large ribosomal subunit protein uL15 from Ectopseudomonas mendocina (strain ymp) (Pseudomonas mendocina).